Reading from the N-terminus, the 92-residue chain is Small ribosomal subunit protein uS19 (92 aa).

This sequence belongs to the universal ribosomal protein uS19 family.

In terms of biological role, protein S19 forms a complex with S13 that binds strongly to the 16S ribosomal RNA. The chain is Small ribosomal subunit protein uS19 from Aliivibrio fischeri (strain ATCC 700601 / ES114) (Vibrio fischeri).